Here is a 321-residue protein sequence, read N- to C-terminus: Ferredoxin--NADP reductase (321 aa).

FAD-binding residues include E33, Q41, Y46, V86, L119, D277, and S318.

The protein belongs to the ferredoxin--NADP reductase type 2 family. As to quaternary structure, homodimer. It depends on FAD as a cofactor.

The enzyme catalyses 2 reduced [2Fe-2S]-[ferredoxin] + NADP(+) + H(+) = 2 oxidized [2Fe-2S]-[ferredoxin] + NADPH. This Lactococcus lactis subsp. cremoris (strain SK11) protein is Ferredoxin--NADP reductase.